The sequence spans 673 residues: MVAEKPKAAAKIAYALSDGRGVLRCSEYGVPYWIVRRDGAAIVVAPSAGHLFGPHTDSRGFPVFDFEWRPIFEFDRGAGYLSKFYRMLSRILPGASLYVNACDYDIEGSVIGFKIIEAFGDVNRARRMKFSTLAPQDIRRAYARMERLDVEMIEAGMARSEMDWLWGINVSRALMEAARRAAGRRVILSAGRVQSPTLVEAYRRWREINLHVPKASVAVKITAEKGGGVFDARPHGWKPQSLETARSIKSELRKNPWLAVEEVRSERSILRPPPAFNLGDLQKEANRILGLPPLRTQSIAEELYLEALISYPRTNSQKLPPSINYRAILDKLAHGPLGREARELLKETGGVLRPVQGSKDDPAHPAIHPTGEKPSQRLSKEHMAVYELIVRRFLAAFSREAIVSKSSVLLRDFQGRVWRAEGLRVEDLGWLKYYHYSTPGEKPMPPLDRGDKARVVRVDVRVEWSQTPVRLDKASLLRWMESVNIGTEGTRARIIETLYKRGYLEGSRKSEVTPLGEAVAVIIQTLFPELSKPDLTRRFESMIEDIRSGRRTRQEVIDMSKKTISKLLESFLDRLDTAVREIGVSLGSVEVEAACHLCGRKAVSAVSGYRLCSHHMEAFDRLRKALPNLASTISSTPREALEAIARGRSRAGAWVRDVAALALRDDGLYKALL.

A Toprim domain is found at 1–134; it reads MVAEKPKAAA…ARRMKFSTLA (134 aa). Positions 4 and 103 each coordinate Mg(2+). The Topo IA-type catalytic domain occupies 149-568; it reads DVEMIEAGMA…MSKKTISKLL (420 aa). Positions 189–194 are interaction with DNA; that stretch reads SAGRVQ. Residue tyrosine 311 is the O-(5'-phospho-DNA)-tyrosine intermediate of the active site. The disordered stretch occupies residues 352–374; sequence LRPVQGSKDDPAHPAIHPTGEKP. The C4-type zinc finger occupies 595-615; it reads CHLCGRKAVSAVSGYRLCSHH.

Belongs to the type IA topoisomerase family. In terms of assembly, monomer. Mg(2+) serves as cofactor.

It carries out the reaction ATP-independent breakage of single-stranded DNA, followed by passage and rejoining.. In terms of biological role, releases the supercoiling and torsional tension of DNA, which is introduced during the DNA replication and transcription, by transiently cleaving and rejoining one strand of the DNA duplex. Introduces a single-strand break via transesterification at a target site in duplex DNA. The scissile phosphodiester is attacked by the catalytic tyrosine of the enzyme, resulting in the formation of a DNA-(5'-phosphotyrosyl)-enzyme intermediate and the expulsion of a 3'-OH DNA strand. The free DNA strand then undergoes passage around the unbroken strand, thus removing DNA supercoils. Finally, in the religation step, the DNA 3'-OH attacks the covalent intermediate to expel the active-site tyrosine and restore the DNA phosphodiester backbone. The sequence is that of DNA topoisomerase 1 from Aeropyrum pernix (strain ATCC 700893 / DSM 11879 / JCM 9820 / NBRC 100138 / K1).